The following is a 128-amino-acid chain: MTGSCCGSTLSSLSYGGGCCQPCCCRDPCCCRPVTCQTTVCRPVTCVPRCTRPICEPCRRPVCCDPCSLQEGCCRPITCCPSSCTAVVCRPCCWATTCCQPVSVQSPCCRPPCGQPTPCSTTCRTSSC.

The segment at 5-112 (CCGSTLSSLS…SVQSPCCRPP (108 aa)) is 10 X 5 AA repeats of C-C-[CDPQRWG]-[APRS]-[CIPSTVD].

It belongs to the KRTAP type 2 family. In terms of assembly, interacts with hair keratins.

Its function is as follows. In the hair cortex, hair keratin intermediate filaments are embedded in an interfilamentous matrix, consisting of hair keratin-associated proteins (KRTAP), which are essential for the formation of a rigid and resistant hair shaft through their extensive disulfide bond cross-linking with abundant cysteine residues of hair keratins. The matrix proteins include the high-sulfur and high-glycine-tyrosine keratins. This chain is Keratin-associated protein 2-3 (KRTAP2-3), found in Homo sapiens (Human).